A 158-amino-acid chain; its full sequence is Deoxyuridine 5'-triphosphate nucleotidohydrolase (158 aa).

Residues 75-77, asparagine 88, 92-94, and lysine 102 contribute to the substrate site; these read RSG and TVD.

The protein belongs to the dUTPase family. The cofactor is Mg(2+).

The catalysed reaction is dUTP + H2O = dUMP + diphosphate + H(+). Its pathway is pyrimidine metabolism; dUMP biosynthesis; dUMP from dCTP (dUTP route): step 2/2. In terms of biological role, this enzyme is involved in nucleotide metabolism: it produces dUMP, the immediate precursor of thymidine nucleotides and it decreases the intracellular concentration of dUTP so that uracil cannot be incorporated into DNA. The sequence is that of Deoxyuridine 5'-triphosphate nucleotidohydrolase from Bifidobacterium longum subsp. infantis (strain ATCC 15697 / DSM 20088 / JCM 1222 / NCTC 11817 / S12).